The primary structure comprises 139 residues: Putative pre-16S rRNA nuclease (139 aa).

Belongs to the YqgF nuclease family.

The protein localises to the cytoplasm. Could be a nuclease involved in processing of the 5'-end of pre-16S rRNA. This chain is Putative pre-16S rRNA nuclease, found in Haemophilus influenzae (strain 86-028NP).